The primary structure comprises 235 residues: Small capsomere-interacting protein (235 aa).

The interval Pro104–Val235 is disordered. The segment covering Pro127 to Gln139 has biased composition (polar residues). The segment covering Thr158–Gln188 has biased composition (low complexity). Residues Leu220 to Val235 show a composition bias toward polar residues.

This sequence belongs to the herpesviridae small capsomere-interacting protein family. Interacts with the major capsid protein/MCP.

It is found in the virion. It localises to the host nucleus. Its function is as follows. Participates in the assembly of the infectious particles by decorating the outer surface of the capsid shell and thus forming a layer between the capsid and the tegument. Complexes composed of the capsid protein VP5 and VP26 assemble together in the host cytoplasm and are translocated to the nucleus, where they accumulate and participate in capsid assembly. Functionally, participates in the assembly of the infectious particles by decorating the outer surface of the capsid shell and thus forming a layer between the capsid and the tegument. Complexes composed of the major capsid protein and small capsomere-interacting protein/SCP assemble together in the host cytoplasm and are translocated to the nucleus, where they accumulate and participate in capsid assembly. The chain is Small capsomere-interacting protein from Homo sapiens (Human).